The chain runs to 157 residues: Methylglyoxal synthase (157 aa).

An MGS-like domain is found at 1–157; sequence MSKVKNIAVV…DFSSYTQRKL (157 aa). Residues histidine 12, lysine 16, 38 to 41, and 71 to 72 each bind substrate; these read TGTT and SG. The active-site Proton donor/acceptor is the aspartate 77. Histidine 104 is a binding site for substrate.

It belongs to the methylglyoxal synthase family.

It catalyses the reaction dihydroxyacetone phosphate = methylglyoxal + phosphate. In terms of biological role, catalyzes the formation of methylglyoxal from dihydroxyacetone phosphate. In Maridesulfovibrio salexigens (strain ATCC 14822 / DSM 2638 / NCIMB 8403 / VKM B-1763) (Desulfovibrio salexigens), this protein is Methylglyoxal synthase.